The chain runs to 280 residues: Shikimate dehydrogenase (NADP(+)) (280 aa).

Residues 20–22 and threonine 67 each bind shikimate; that span reads TLS. The active-site Proton acceptor is the lysine 71. Residues asparagine 92 and aspartate 107 each contribute to the shikimate site. NADP(+) is bound by residues 131–135, 154–159, and leucine 224; these read GAGGA and NRTIDK. Tyrosine 226 lines the shikimate pocket. NADP(+) is bound at residue glycine 247.

This sequence belongs to the shikimate dehydrogenase family. As to quaternary structure, homodimer.

It catalyses the reaction shikimate + NADP(+) = 3-dehydroshikimate + NADPH + H(+). The protein operates within metabolic intermediate biosynthesis; chorismate biosynthesis; chorismate from D-erythrose 4-phosphate and phosphoenolpyruvate: step 4/7. Its function is as follows. Involved in the biosynthesis of the chorismate, which leads to the biosynthesis of aromatic amino acids. Catalyzes the reversible NADPH linked reduction of 3-dehydroshikimate (DHSA) to yield shikimate (SA). The sequence is that of Shikimate dehydrogenase (NADP(+)) from Carboxydothermus hydrogenoformans (strain ATCC BAA-161 / DSM 6008 / Z-2901).